Here is a 322-residue protein sequence, read N- to C-terminus: Peroxisomal adenine nucleotide carrier 1 (322 aa).

Solcar repeat units lie at residues 5–94, 104–184, and 202–298; these read LESV…FKRV, IGTK…LKQH, and LSAF…ITAT. 6 helical membrane passes run 8 to 28, 104 to 124, 158 to 178, 201 to 221, 254 to 274, and 286 to 306; these read VSEATSGAIGSLLSTTILYPL, IGTKANLLIAAAAGACTSVLI, FDGLGISLLLTSNPAIQYTVF, VLSAFMAFVLGAVSKSVATVL, IPGVVYAIWRKEGMLGFFKGL, and ALLLMIKEKITATTWILILAI.

Belongs to the mitochondrial carrier (TC 2.A.29) family. In terms of tissue distribution, expressed in stamens, pollen grains, seeds, leaves, cotyledons, roots, stems, flowers, hypocotyls and siliques.

The protein localises to the peroxisome membrane. Its function is as follows. Peroxisomal adenine nucleotide transporter catalyzing the counterexchange of ATP with AMP. ATP is needed by reactions that generate acyl-CoA for peroxisomal fatty acid beta-oxidation during postgerminative growth. Required for the beta-oxidation reactions involved in auxin biosynthesis and for the conversion of seed-reserved triacylglycerols into sucrose that is necessary for growth before the onset of photosynthesis. The protein is Peroxisomal adenine nucleotide carrier 1 (PNC1) of Arabidopsis thaliana (Mouse-ear cress).